The primary structure comprises 281 residues: Glyceraldehyde dehydrogenase medium chain (281 aa).

The FAD-binding PCMH-type domain occupies 1 to 176; it reads MYPPEFSYVR…TQIEVPVLDG (176 aa). Residues 31 to 35 and 110 to 114 contribute to the FAD site; these read AGGQS and TIGGA.

In terms of assembly, heterotrimer composed of a large chain (CutA), a medium chain (CutB) and a small chain (CutC). It depends on FAD as a cofactor.

Its subcellular location is the cytoplasm. The enzyme catalyses D-glyceraldehyde + A + H2O = (R)-glycerate + AH2 + H(+). In terms of biological role, component of the glyceraldehyde dehydrogenase which is involved the nonphosphorylated Entner-Doudoroff pathway. Catalyzes the oxidation of D-glyceraldehyde to yield glycerate. When the artificial electron acceptor 2,6-dichlorophenol-indophenol (Cl2Ind) is used, the enzyme shows a broad substrate range (glyceraldehyde-3-phosphate, formaldehyde, acetaldehyde, propionaldehyde and isobutyraldehyde), but is most active with D-glyceraldehyde. It is not known which acceptor is utilized in vivo. The sequence is that of Glyceraldehyde dehydrogenase medium chain (cutB) from Sulfolobus acidocaldarius (strain ATCC 33909 / DSM 639 / JCM 8929 / NBRC 15157 / NCIMB 11770).